Here is an 884-residue protein sequence, read N- to C-terminus: Androgen receptor (884 aa).

Residues Met1–Lys522 form a modulating region. Residues Met1–Ala551 are interaction with ZNF318. Disordered stretches follow at residues Val33–Leu145 and Gln174–Gly207. Composition is skewed to low complexity over residues Gln55–Gln79 and Gln174–Ala196. Phosphoserine; by CDK9 is present on Ser61. A Phosphoserine modification is found at Ser75. The span at Pro197–Gly207 shows a compositional bias: polar residues. Phosphotyrosine; by CSK is present on Tyr204. Ser237 bears the Phosphoserine mark. The residue at position 248 (Tyr248) is a Phosphotyrosine; by CSK and TNK2. The interval Asp275 to Ser294 is disordered. Phosphotyrosine; by CSK occurs at positions 288, 327, 338, and 343. Tyr344 carries the post-translational modification Phosphotyrosine; by CSK and TNK2. A Glycyl lysine isopeptide (Lys-Gly) (interchain with G-Cter in SUMO) cross-link involves residue Lys367. Tyr374 carries the phosphotyrosine; by CSK modification. Lys485 is covalently cross-linked (Glycyl lysine isopeptide (Lys-Gly) (interchain with G-Cter in SUMO)). Phosphotyrosine; by CSK occurs at positions 499 and 516. The segment at Tyr516–Thr883 is interaction with LPXN. Residues Thr523–Leu596 constitute a DNA-binding region (nuclear receptor). 2 NR C4-type zinc fingers span residues Cys524 to Cys544 and Cys560 to Cys584. Residues Tyr536–Val626 are interaction with HIPK3. The interval Gln556–Thr883 is interaction with CCAR1. An interaction with KAT7 region spans residues Met589–Thr883. Residue Ser615 is modified to Phosphoserine; by STK4/MST1. In terms of domain architecture, NR LBD spans Glu633–Ile864. Positions 670 and 717 each coordinate 17beta-hydroxy-5alpha-androstan-3-one. Residues Lys810 and Lys812 each participate in a glycyl lysine isopeptide (Lys-Gly) (interchain with G-Cter in ubiquitin) cross-link. Thr842 is a 17beta-hydroxy-5alpha-androstan-3-one binding site. Position 880 is a phosphotyrosine; by CSK (Tyr880).

The protein belongs to the nuclear hormone receptor family. NR3 subfamily. As to quaternary structure, binds DNA as a homodimer. Part of a ternary complex containing AR, EFCAB6/DJBP and PARK7. Interacts with HIPK3 and NR0B2 in the presence of androgen. The ligand binding domain interacts with KAT7/HBO1 in the presence of dihydrotestosterone. Interacts with EFCAB6/DJBP, PQBP1, RANBP9, RBAK, SPDEF, SRA1, TGFB1I1 and RREB1. Interacts with ZMIZ1/ZIMP10 and ZMIZ2/ZMIP7 which both enhance its transactivation activity. Interacts with SLC30A9 and RAD54L2/ARIP4. Interacts with MACROD1 (via macro domain). Interacts via the ligand-binding domain with LXXLL and FXXLF motifs from NCOA1, NCOA2, NCOA3 and MAGEA11. Interacts (via nuclear receptor DNA binding domain and nuclear receptor ligand binding domain) with NCOA4. The AR N-terminal poly-Gln region binds Ran resulting in enhancement of AR-mediated transactivation. Ran-binding decreases as the poly-Gln length increases. Interacts with HIP1 (via coiled coil domain). Interacts (via ligand-binding domain) with TRIM68. Interacts with TNK2. Interacts with USP26. Interacts with RNF6. Interacts (regulated by RNF6 probably through polyubiquitination) with RNF14; regulates AR transcriptional activity. Interacts with PRMT2 and TRIM24. Interacts with RACK1. Interacts with RANBP10; this interaction enhances dihydrotestosterone-induced AR transcriptional activity. Interacts with PRPF6 in a hormone-independent way; this interaction enhances dihydrotestosterone-induced AR transcriptional activity. Interacts with STK4/MST1. Interacts with ZIPK/DAPK3. Interacts with LPXN. Interacts with MAK. Part of a complex containing AR, MAK and NCOA3. Interacts with CRY1. Interacts with CCAR1 and GATA2. Interacts with ZNF318. Interacts with BUD31. Interacts with ARID4A. Interacts with ARID4B. Interacts (via NR LBD domain) with ZBTB7A; the interaction is direct and androgen-dependent. Interacts with NCOR1. Interacts with NCOR2. Interacts with CRY2 in a ligand-dependent manner. In terms of processing, phosphorylated in prostate cancer cells in response to several growth factors including EGF. Phosphorylation is induced by c-Src kinase (CSK). Tyr-499 is one of the major phosphorylation sites and an increase in phosphorylation and Src kinase activity is associated with prostate cancer progression. Phosphorylation by TNK2 enhances the DNA-binding and transcriptional activity. Phosphorylation at Ser-61 by CDK9 regulates AR promoter selectivity and cell growth. Post-translationally, sumoylated on Lys-367 (major) and Lys-485. Ubiquitinated. Deubiquitinated by USP26. 'Lys-6' and 'Lys-27'-linked polyubiquitination by RNF6 modulates AR transcriptional activity and specificity. Palmitoylated by ZDHHC7 and ZDHHC21. Palmitoylation is required for plasma membrane targeting and for rapid intracellular signaling via ERK and AKT kinases and cAMP generation.

The protein localises to the nucleus. The protein resides in the cytoplasm. Functionally, steroid hormone receptors are ligand-activated transcription factors that regulate eukaryotic gene expression and affect cellular proliferation and differentiation in target tissues. Transcription factor activity is modulated by bound coactivator and corepressor proteins like ZBTB7A that recruits NCOR1 and NCOR2 to the androgen response elements/ARE on target genes, negatively regulating androgen receptor signaling and androgen-induced cell proliferation. Transcription activation is also down-regulated by NR0B2. Activated, but not phosphorylated, by HIPK3 and ZIPK/DAPK3. This Eulemur fulvus collaris (Collared brown lemur) protein is Androgen receptor (AR).